The sequence spans 37 residues: Large ribosomal subunit protein bL36 (37 aa).

The protein belongs to the bacterial ribosomal protein bL36 family.

The polypeptide is Large ribosomal subunit protein bL36 (Campylobacter jejuni subsp. jejuni serotype O:6 (strain 81116 / NCTC 11828)).